The chain runs to 149 residues: CCAAT/enhancer-binding protein gamma (149 aa).

Polar residues predominate over residues 1–12; the sequence is MSKVSQQNSTPG. Positions 1 to 92 are disordered; sequence MSKVSQQNST…SKQKAQDTLQ (92 aa). Residue lysine 3 forms a Glycyl lysine isopeptide (Lys-Gly) (interchain with G-Cter in SUMO2) linkage. Over residues 28-37 the composition is skewed to low complexity; that stretch reads LQQVPQLVPA. The span at 56 to 72 shows a compositional bias: basic and acidic residues; sequence SPMDRNSDEYRQRRERN. One can recognise a bZIP domain in the interval 62-125; it reads SDEYRQRRER…SVLKDLFLEH (64 aa). Positions 66–93 are basic motif; the sequence is RQRRERNNMAVKKSRLKSKQKAQDTLQR. The segment at 97-118 is leucine-zipper; that stretch reads LKEENERLEAKIKLLTKELSVL. The interval 128–149 is disordered; the sequence is NLADNVQPSSTENTTNPDKAGQ. A compositionally biased stretch (polar residues) spans 131 to 149; the sequence is DNVQPSSTENTTNPDKAGQ.

This sequence belongs to the bZIP family. C/EBP subfamily. Binds DNA as a dimer and can form stable heterodimers with CEBPA and CEBPB. Interacts with ZNF638; this interaction increases transcriptional activation.

It is found in the nucleus. In terms of biological role, transcription factor that binds to the promoter and the enhancer regions of target genes. Binds to the enhancer element PRE-I (positive regulatory element-I) of the IL-4 gene. Binds to the promoter and the enhancer of the immunoglobulin heavy chain. Binds to GPE1, a cis-acting element in the G-CSF gene promoter. In Bos taurus (Bovine), this protein is CCAAT/enhancer-binding protein gamma (CEBPG).